The sequence spans 402 residues: 1-deoxy-D-xylulose 5-phosphate reductoisomerase (402 aa).

Thr27, Gly28, Ser29, Ile30, Gly53, Lys54, Asn55, and Asn140 together coordinate NADPH. Residue Lys141 participates in 1-deoxy-D-xylulose 5-phosphate binding. Glu142 is an NADPH binding site. Asp166 lines the Mn(2+) pocket. Positions 167, 168, 192, and 215 each coordinate 1-deoxy-D-xylulose 5-phosphate. Residue Glu168 coordinates Mn(2+). Gly221 is a binding site for NADPH. Residues Ser228, Asn233, Lys234, and Glu237 each contribute to the 1-deoxy-D-xylulose 5-phosphate site. Glu237 lines the Mn(2+) pocket.

The protein belongs to the DXR family. Mg(2+) serves as cofactor. Mn(2+) is required as a cofactor.

The catalysed reaction is 2-C-methyl-D-erythritol 4-phosphate + NADP(+) = 1-deoxy-D-xylulose 5-phosphate + NADPH + H(+). The protein operates within isoprenoid biosynthesis; isopentenyl diphosphate biosynthesis via DXP pathway; isopentenyl diphosphate from 1-deoxy-D-xylulose 5-phosphate: step 1/6. Its function is as follows. Catalyzes the NADPH-dependent rearrangement and reduction of 1-deoxy-D-xylulose-5-phosphate (DXP) to 2-C-methyl-D-erythritol 4-phosphate (MEP). The polypeptide is 1-deoxy-D-xylulose 5-phosphate reductoisomerase (Lawsonia intracellularis (strain PHE/MN1-00)).